We begin with the raw amino-acid sequence, 391 residues long: DNA replication and repair protein RecF (391 aa).

Position 30 to 37 (30 to 37 (GSNGQGKT)) interacts with ATP.

Belongs to the RecF family.

It is found in the cytoplasm. The RecF protein is involved in DNA metabolism; it is required for DNA replication and normal SOS inducibility. RecF binds preferentially to single-stranded, linear DNA. It also seems to bind ATP. In Saccharopolyspora erythraea (strain ATCC 11635 / DSM 40517 / JCM 4748 / NBRC 13426 / NCIMB 8594 / NRRL 2338), this protein is DNA replication and repair protein RecF.